The sequence spans 394 residues: NADH dehydrogenase [ubiquinone] iron-sulfur protein 2 (394 aa).

The segment covering 1–16 (MTTKNRQIKNFTSNFG) has biased composition (polar residues). Residues 1 to 22 (MTTKNRQIKNFTSNFGPQHPAA) are disordered.

Belongs to the complex I 49 kDa subunit family. Complex I is composed of about 45 different subunits. This is a component of the iron-sulfur (IP) fragment of the enzyme.

It localises to the mitochondrion. The enzyme catalyses a ubiquinone + NADH + 5 H(+)(in) = a ubiquinol + NAD(+) + 4 H(+)(out). Its function is as follows. Core subunit of the mitochondrial membrane respiratory chain NADH dehydrogenase (Complex I) that is believed to belong to the minimal assembly required for catalysis. Complex I functions in the transfer of electrons from NADH to the respiratory chain. The immediate electron acceptor for the enzyme is believed to be ubiquinone. Component of the iron-sulfur (IP) fragment of the enzyme. This Nicotiana sylvestris (Wood tobacco) protein is NADH dehydrogenase [ubiquinone] iron-sulfur protein 2 (NAD7).